Consider the following 302-residue polypeptide: uncharacterized protein (302 aa).

An N-terminal signal peptide occupies residues 1–52 (MLKKLKVVRLLVNHLIYCPSIFMPYSKNMKKKIWNKTSLGALFMLFGTALTA).

Belongs to the MG439/MG440 family.

This is an uncharacterized protein from Mycoplasma pneumoniae (strain ATCC 29342 / M129 / Subtype 1) (Mycoplasmoides pneumoniae).